We begin with the raw amino-acid sequence, 293 residues long: Homeobox protein ceh-24 (293 aa).

Basic and acidic residues-rich tracts occupy residues 1-15 (MSEK…KKDE) and 22-38 (QETK…MKIK). 2 disordered regions span residues 1–38 (MSEK…MKIK) and 203–256 (EKEK…SNGV). The segment at residues 144–203 (RRKRRVLFSQAQVYELERRFKQAKYLTAPEREQLANSIRLTPTQVKIWFQNHRYKCKRQE) is a DNA-binding region (homeobox).

Belongs to the NK-2 homeobox family. Expressed in the 8 vulval muscles, 8-10 ventral neurons in the head and in the most posterior pharyngeal muscle cell, m8.

The protein localises to the nucleus. Probable transcriptional regulator that is required in neural development for the normal formation of sublateral cholinergic motor neuron processes. Plays a role in regulating the expression of acetylcholine transporter protein unc-17 in the sublateral processes. In particular, it is required in sublateral motor neurons for a left-right turning behavior that occurs during the lethargus phase of the normal sleep process called 'flipping'. During 'flipping' animals rotate 180 degrees about their longitudinal axis. This is Homeobox protein ceh-24 from Caenorhabditis briggsae.